Here is a 133-residue protein sequence, read N- to C-terminus: Ubiquitin-like FUBI-ribosomal protein eS30 fusion protein (133 aa).

The segment at 84 to 110 (GKVRGQTPKVAKQEKKKKKTGRAKRRM) is disordered. Positions 97–110 (EKKKKKTGRAKRRM) are enriched in basic residues. The residue at position 125 (Lys-125) is an N6-succinyllysine.

It in the N-terminal section; belongs to the ubiquitin family. This sequence in the C-terminal section; belongs to the eukaryotic ribosomal protein eS30 family. As to quaternary structure, component of the 40S subunit of the ribosome. FUBI is cleaved from ribosomal protein S30 by the deubiquitinase USP36 before the assembly of ribosomal protein S30 into pre-40S ribosomal particles. FUBI removal from ribosomal protein S30 is a crucial event for the final maturation of pre-40S particles.

It is found in the nucleus. Its subcellular location is the cytoplasm. In terms of biological role, may have pro-apoptotic activity. Component of the 40S subunit of the ribosome. Contributes to the assembly and function of 40S ribosomal subunits. This Mus musculus (Mouse) protein is Ubiquitin-like FUBI-ribosomal protein eS30 fusion protein (Fau).